The primary structure comprises 357 residues: UDP-N-acetylglucosamine--N-acetylmuramyl-(pentapeptide) pyrophosphoryl-undecaprenol N-acetylglucosamine transferase (357 aa).

UDP-N-acetyl-alpha-D-glucosamine-binding positions include 14–16, N120, R164, S194, and Q291; that span reads TGG.

Belongs to the glycosyltransferase 28 family. MurG subfamily.

The protein localises to the cell inner membrane. The catalysed reaction is di-trans,octa-cis-undecaprenyl diphospho-N-acetyl-alpha-D-muramoyl-L-alanyl-D-glutamyl-meso-2,6-diaminopimeloyl-D-alanyl-D-alanine + UDP-N-acetyl-alpha-D-glucosamine = di-trans,octa-cis-undecaprenyl diphospho-[N-acetyl-alpha-D-glucosaminyl-(1-&gt;4)]-N-acetyl-alpha-D-muramoyl-L-alanyl-D-glutamyl-meso-2,6-diaminopimeloyl-D-alanyl-D-alanine + UDP + H(+). Its pathway is cell wall biogenesis; peptidoglycan biosynthesis. In terms of biological role, cell wall formation. Catalyzes the transfer of a GlcNAc subunit on undecaprenyl-pyrophosphoryl-MurNAc-pentapeptide (lipid intermediate I) to form undecaprenyl-pyrophosphoryl-MurNAc-(pentapeptide)GlcNAc (lipid intermediate II). In Fusobacterium nucleatum subsp. nucleatum (strain ATCC 25586 / DSM 15643 / BCRC 10681 / CIP 101130 / JCM 8532 / KCTC 2640 / LMG 13131 / VPI 4355), this protein is UDP-N-acetylglucosamine--N-acetylmuramyl-(pentapeptide) pyrophosphoryl-undecaprenol N-acetylglucosamine transferase.